We begin with the raw amino-acid sequence, 734 residues long: Myb-like protein J (734 aa).

Disordered stretches follow at residues 1–35, 128–196, and 221–378; these read MPNNQQNQIESPSKNTSNVGGSTLLNNNSPPFKSN, QKDQ…PTMM, and SPIS…LKQG. Residues 131–142 show a composition bias toward basic and acidic residues; sequence QQQKEQQKEQQK. Positions 164 to 173 are enriched in low complexity; sequence TTTTTTTTTT. Residues 174–196 show a composition bias toward polar residues; the sequence is AVEQQGAEQQDTNLNSTSSPTMM. Over residues 221-230 the composition is skewed to low complexity; that stretch reads SPISSSLNNS. A compositionally biased stretch (polar residues) spans 231–257; that stretch reads QDNTKPVSPDNIENTSNPMDTSSSNGK. Over residues 258–372 the composition is skewed to low complexity; sequence TPTITPIVTP…GGKTNPTGKK (115 aa). The region spanning 371–426 is the HTH myb-type domain; sequence KKTSLKQGWTKEEHIRFLNGIQIHGKGAWKEIAQFVGTRTPTQIQSHAQKYYLRQK. A DNA-binding region (H-T-H motif) is located at residues 399–422; it reads WKEIAQFVGTRTPTQIQSHAQKYY. Residues 445–454 are compositionally biased toward low complexity; that stretch reads DDNLNNSNKN. The segment at 445-623 is disordered; the sequence is DDNLNNSNKN…GNILRHQNSH (179 aa). Positions 455–468 are enriched in basic and acidic residues; the sequence is NVDKNKQDDKEKKT. Basic residues predominate over residues 469–478; the sequence is QKTKKTKSKS. Low complexity-rich tracts occupy residues 489 to 543 and 574 to 615; these read QQQQ…SSQT and NNNN…NEGN.

Its subcellular location is the nucleus. The sequence is that of Myb-like protein J (mybJ) from Dictyostelium discoideum (Social amoeba).